A 344-amino-acid chain; its full sequence is Hypoxia-inducible factor 1-alpha inhibitor (344 aa).

Residue A2 is modified to N-acetylalanine. Residues 133–303 (GRVYLQQTLN…PKRIEYPLKA (171 aa)) form the JmjC domain. Y136 serves as a coordination point for 2-oxoglutarate. Residues D143 and 173–174 (LT) contribute to the substrate site. A 2-oxoglutarate-binding site is contributed by T187. Residues H190 and D192 each coordinate Fe cation. 192 to 194 (DEQ) is a substrate binding site. Residues N196 and K205 each contribute to the 2-oxoglutarate site. A substrate-binding site is contributed by 229-230 (RQ). H270 serves as a coordination point for Fe cation. A 2-oxoglutarate-binding site is contributed by N285. Residues A291 and N312 each coordinate substrate.

Homodimer; homodimerization is essential for catalytic activity. It depends on Fe(2+) as a cofactor.

It localises to the nucleus. It is found in the cytoplasm. The protein localises to the perinuclear region. It catalyses the reaction L-asparaginyl-[hypoxia-inducible factor alpha subunit] + 2-oxoglutarate + O2 = (3S)-3-hydroxy-L-asparaginyl-[hypoxia-inducible factor alpha subunit] + succinate + CO2. The catalysed reaction is L-histidyl-[ankyrin-repeat domain protein] + 2-oxoglutarate + O2 = (3S)-3-hydroxy-L-histidyl-[ankyrin-repeat domain protein] + succinate + CO2. It carries out the reaction L-asparaginyl-[ankyrin-repeat domain protein] + 2-oxoglutarate + O2 = (3S)-3-hydroxy-L-asparaginyl-[ankyrin-repeat domain protein] + succinate + CO2. The enzyme catalyses L-aspartyl-[ankyrin-repeat domain protein] + 2-oxoglutarate + O2 = (3S)-3-hydroxy-L-aspartyl-[ankyrin-repeat domain protein] + succinate + CO2. Hydroxylates a specific Asn residue in the C-terminal transactivation domain (CAD) of HIF-1 alpha. The hydroxylation prevents interaction of HIF-1 with transcriptional coactivators. Also hydroxylates specific Asn, Asp and His residues within ankyrin repeat domain-containing proteins. This chain is Hypoxia-inducible factor 1-alpha inhibitor (hif1an), found in Danio rerio (Zebrafish).